The sequence spans 591 residues: V-type ATP synthase alpha chain (591 aa).

ATP is bound at residue 232 to 239 (GPFGAGKT).

Belongs to the ATPase alpha/beta chains family.

It carries out the reaction ATP + H2O + 4 H(+)(in) = ADP + phosphate + 5 H(+)(out). Its function is as follows. Produces ATP from ADP in the presence of a proton gradient across the membrane. The V-type alpha chain is a catalytic subunit. The sequence is that of V-type ATP synthase alpha chain from Clostridium perfringens (strain SM101 / Type A).